A 130-amino-acid chain; its full sequence is Seminal plasma protein pB1 (130 aa).

The signal sequence occupies residues 1 to 25 (MAPRLGIFLLWAGVSVFLPLDPVNG). Fibronectin type-II domains follow at residues 39–83 (TSDD…YCRS) and 84–130 (TDYA…WRYC). Cystine bridges form between Cys44/Cys68, Cys58/Cys81, Cys89/Cys115, and Cys103/Cys130.

The protein belongs to the seminal plasma protein family. In terms of tissue distribution, component of seminal plasma.

The protein resides in the secreted. May form a complex with spermadhesin AQN-1 which possesses phosphorylcholine-binding activity. This Sus scrofa (Pig) protein is Seminal plasma protein pB1.